An 88-amino-acid chain; its full sequence is Small ribosomal subunit protein bS20 (88 aa).

The span at 1–21 (MANSKSAKKRALQSEKRRQHN) shows a compositional bias: basic residues. Positions 1–27 (MANSKSAKKRALQSEKRRQHNASRSSM) are disordered.

The protein belongs to the bacterial ribosomal protein bS20 family.

Functionally, binds directly to 16S ribosomal RNA. In Shewanella piezotolerans (strain WP3 / JCM 13877), this protein is Small ribosomal subunit protein bS20.